We begin with the raw amino-acid sequence, 352 residues long: DNA polymerase IV (352 aa).

Residues 3 to 187 (VLFVDFDYFY…LDIADVPGIG (185 aa)) enclose the UmuC domain. The Mg(2+) site is built by aspartate 7 and aspartate 105. The active site involves glutamate 106.

The protein belongs to the DNA polymerase type-Y family. In terms of assembly, monomer. Interacts with the PCNA heterotrimer via PCNA1. Mg(2+) serves as cofactor.

It localises to the cytoplasm. It carries out the reaction DNA(n) + a 2'-deoxyribonucleoside 5'-triphosphate = DNA(n+1) + diphosphate. Its function is as follows. Poorly processive, error-prone DNA polymerase involved in untargeted mutagenesis. Copies undamaged DNA at stalled replication forks, which arise in vivo from mismatched or misaligned primer ends. These misaligned primers can be extended by PolIV. Exhibits no 3'-5' exonuclease (proofreading) activity. It is involved in translesional synthesis. The chain is DNA polymerase IV (dbh) from Saccharolobus solfataricus (strain ATCC 35092 / DSM 1617 / JCM 11322 / P2) (Sulfolobus solfataricus).